Consider the following 293-residue polypeptide: Ribonuclease Z (293 aa).

H60, H62, D64, H65, H132, D200, and H256 together coordinate Zn(2+). D64 (proton acceptor) is an active-site residue.

The protein belongs to the RNase Z family. As to quaternary structure, homodimer. It depends on Zn(2+) as a cofactor.

It carries out the reaction Endonucleolytic cleavage of RNA, removing extra 3' nucleotides from tRNA precursor, generating 3' termini of tRNAs. A 3'-hydroxy group is left at the tRNA terminus and a 5'-phosphoryl group is left at the trailer molecule.. Functionally, zinc phosphodiesterase, which displays some tRNA 3'-processing endonuclease activity. Probably involved in tRNA maturation, by removing a 3'-trailer from precursor tRNA. The sequence is that of Ribonuclease Z from Sulfurisphaera tokodaii (strain DSM 16993 / JCM 10545 / NBRC 100140 / 7) (Sulfolobus tokodaii).